We begin with the raw amino-acid sequence, 573 residues long: MDNYRRLHTPVALCVASPPAPPTTSWKSMEGLVQCSANHVPLSPITFLERSSKAYRDNTSLVYGSVRYTWAQTHHRCLKLASALTTHFGISPGDVVATFSYNIPEIYELHFAVPMAGGILCTLNARNDSAMVSTLLAHSEAKLIFVEPQLLETARAALDLLAQKDIKPPTLVLLTDSESFTSSSYDHYNHLLANGSDDFEIRRPKNECDPISINYTSGTTARPKAVVYSHRGAYLNSIATVLLHGMGTRSVYLWSVPMFHCNGWCFPWGAAAQGATNICIRKVSPKAIFDNIHLHKVTHFGAAPTVLNMIVNSPEGNLHTPLPHKVEVMTGGSPPPPKVIARMEEMGFQVNHIYGLTETHGPATNCVCKPEWDALQPEERYALKARQGLNHLAMEEMDVRDPVSMESVRADGTTIGEVMFRGNTVMSGYFKDLKATEEAFEGGWFRTGDLGVKHEDGYIQLKDRKKDVVISGGENVSTVEVETVLYSHEAVLEAAVVARPDKLWGETPCAFVTLKEGFDNGVSADQIIKFCRDRLPHYMAPKTVVFEELPKTSTGKIQKYILKEKAKAMGSLS.

ATP is bound by residues 216–224 (TSGTTARPK), 352–357 (HIYGLT), Asp449, 461–464 (LKDR), and Lys556. An SBD1 region spans residues 284–352 (SPKAIFDNIH…MEEMGFQVNH (69 aa)). Positions 353–429 (IYGLTETHGP…FRGNTVMSGY (77 aa)) are SBD2.

It belongs to the ATP-dependent AMP-binding enzyme family.

Its subcellular location is the cytoplasm. The protein localises to the cytosol. The protein is Probable CoA ligase CCL13 of Humulus lupulus (European hop).